A 448-amino-acid chain; its full sequence is Phosphoglucosamine mutase (448 aa).

Residue Ser100 is the Phosphoserine intermediate of the active site. Ser100, Asp240, Asp242, and Asp244 together coordinate Mg(2+). A Phosphoserine modification is found at Ser100.

It belongs to the phosphohexose mutase family. Requires Mg(2+) as cofactor. Post-translationally, activated by phosphorylation.

The enzyme catalyses alpha-D-glucosamine 1-phosphate = D-glucosamine 6-phosphate. In terms of biological role, catalyzes the conversion of glucosamine-6-phosphate to glucosamine-1-phosphate. The polypeptide is Phosphoglucosamine mutase (Clostridium tetani (strain Massachusetts / E88)).